Here is a 761-residue protein sequence, read N- to C-terminus: Autophagy-related protein 13 (761 aa).

Low complexity-rich tracts occupy residues 1 to 10 (MLSDFKQQQQ), 290 to 303 (SSSV…TSLK), and 327 to 340 (STSP…ISQP). Disordered stretches follow at residues 1 to 25 (MLSD…HDDT), 277 to 367 (FHKR…SNKS), 398 to 456 (ISGT…QSDL), 488 to 507 (DLRL…NMSI), 544 to 642 (HSSR…SSIS), and 691 to 761 (YQNV…SRNF). 2 stretches are compositionally biased toward polar residues: residues 344–367 (PIQN…SNKS) and 400–411 (GTSVPRSFSSST). Residues 429–444 (RFASSFGSRASRRYSS) are compositionally biased toward low complexity. Residues 445–456 (TSIRQQTPQSDL) are compositionally biased toward polar residues. Over residues 566–590 (QQQQQQQQNQQQSQSPHTNTTSSIH) the composition is skewed to low complexity. Positions 600–613 (RMKDARPRSEDHQQ) are enriched in basic and acidic residues. Residues 614–631 (TKFSAARRSSNISPTTAV) show a composition bias toward polar residues. The span at 632 to 642 (PSSIGTPSSIS) shows a compositional bias: low complexity. Positions 695-709 (FDDDDEDDNDEEEGD) are enriched in acidic residues. The span at 710–720 (REGNQLHEGRN) shows a compositional bias: basic and acidic residues. The span at 721-730 (STESSQNQSK) shows a compositional bias: polar residues.

This sequence belongs to the ATG13 family. Fungi subfamily. As to quaternary structure, interacts with ATG1 to form the ATG1-ATG13 kinase complex.

It localises to the cytoplasm. Its subcellular location is the preautophagosomal structure. In terms of biological role, plays a key role in autophagy. Activates the atg1 kinase in a nutritional condition dependent manner through the TOR pathway, leading to autophagy. Also involved in cytoplasm to vacuole transport (Cvt) and more specifically in Cvt vesicle formation. Seems to play a role in the switching machinery regulating the conversion between the Cvt pathway and autophagy. Finally, plays an important role in biofilm formation and resistance to antifungal compounds such as fluconazole, itraconazole, terbinafine and caspofungin. The sequence is that of Autophagy-related protein 13 from Candida albicans (strain SC5314 / ATCC MYA-2876) (Yeast).